The following is a 174-amino-acid chain: Pediocin PA-1 biosynthesis protein PedC (174 aa).

In terms of biological role, probably involved in pediocin PA-1 biosynthesis. The protein is Pediocin PA-1 biosynthesis protein PedC (pedC) of Pediococcus acidilactici.